A 1255-amino-acid chain; its full sequence is MGVDPFKTTETLEADKETNGGVPVKDKLTFKAPERKSRLGLDARAIEKKDNAKTEGEFKVPKKSAISVTSSLDEEDKSDVSGLDFGTENTRPVHSSRRYREKSSRSQSAQESTVTTENAGTSDISITPRTLSCTSSYERGGSNRHREEHRRDRSETPRSRQRNTYDEMDHYRRRESYRQSDRDYHGEKRRRYNSDWRTPGRSDWDDGQDEWERSPHGDRGSSYSRRPQPSPSPMLAAASPDARLASPWLDTPRSTMSSASPWDMGAPSPIPIRASGSSIRSSSSRYGGRSNQLAYSREGDLTNEGHSDEDRSQGAEEFKHEITETMRVEMEYQSDRAWYDTDEGNSLFDADSASFFLGDDASLQKKETELAKRLVRRDGSKMSLAQSKKYSQLNADNAQWEDRQLLRSGAVRGTEVQTEFDSEEERKAILLVHDTKPPFLDGRVVYTKQAEPVMPVKDPTSDMAIISRKGSGLVKEIREKQSANKSRQRFWELAGSNLGNILGIEKSAEQIDADTAVVGDDGEVDFKGEAKFAQHMKKGEAVSEFAMSKTMAEQRQYLPIFSVRDELLQVIRENQVIVVVGETGSGKTTQLTQYLHEDGYTINGIVGCTQPRRVAAMSVAKRVSEEMETELGDKIGYAIRFEDVTGPNTVIKYMTDGVLLRETLKDSDLDKYRVVVMDEAHERSLNTDVLFGILKKVVARRRDFKLIVTSATLNAQKFSNFFGSVPIFNIPGRTFPVNILYSKTPCEDYVEAAVKQAMTIHITSPPGDILIFMTGQDEIEAACFSLKERMEQLVSSSSREITNLLILPIYSQLPADLQAKIFQKPEDGARKCIVATNIAETSLTVDGIYYVIDTGYGKMKVFNPRMGMDALQVFPISRAASDQRAGRAGRTGPGTCYRLYTESAYLNEMLPSPVPEIQRTNLGNVVLLLKSLKIDNLLDFDFMDPPPQENILNSMYQLWVLGALNNVGGLTDLGWKMVEFPLDPPLAKMLLMGERLDCIDEVLTIVSMLSVPSVFFRPKERAEESDAAREKFFVPESDHLTLLNVYQQWKEHDYRGDWCNDHYLQVKGLRKAREVRSQLLDILKQLKIELRSCGPDWDIVRKAICSAYFHNSARLKGVGEYVNCRTGMPCHLHPSSALYGLGYTPDYVVYHELILTTKEYMQCATSVEPHWLAELGPMFFSVKDSDTSMLEHKKKQKEEKSGMEEEMEKLRRDQVESELRSKERERKKRAKQQQQISGPGLKKGTTFLRPKKLGL.

The tract at residues 1–316 is disordered; sequence MGVDPFKTTE…SDEDRSQGAE (316 aa). Residues 13–60 are compositionally biased toward basic and acidic residues; the sequence is EADKETNGGVPVKDKLTFKAPERKSRLGLDARAIEKKDNAKTEGEFKV. Residues 109 to 137 are compositionally biased toward polar residues; it reads AQESTVTTENAGTSDISITPRTLSCTSSY. Short sequence motifs (nuclear localization signal) lie at residues 144 to 153 and 172 to 191; these read RHREEHRRDR and RRRE…KRRR. A compositionally biased stretch (basic and acidic residues) spans 144 to 219; that stretch reads RHREEHRRDR…EWERSPHGDR (76 aa). 2 stretches are compositionally biased toward low complexity: residues 220 to 240 and 271 to 290; these read GSSY…AASP and PIRA…GGRS. The span at 297-316 shows a compositional bias: basic and acidic residues; the sequence is REGDLTNEGHSDEDRSQGAE. The region spanning 568–731 is the Helicase ATP-binding domain; the sequence is LQVIRENQVI…FGSVPIFNIP (164 aa). 581–588 provides a ligand contact to ATP; the sequence is GETGSGKT. A DEAH box motif is present at residues 678–681; sequence DEAH. Residues 753–933 form the Helicase C-terminal domain; it reads AVKQAMTIHI…NVVLLLKSLK (181 aa). A compositionally biased stretch (basic and acidic residues) spans 1190–1224; that stretch reads LEHKKKQKEEKSGMEEEMEKLRRDQVESELRSKER. The tract at residues 1190–1255 is disordered; sequence LEHKKKQKEE…TFLRPKKLGL (66 aa).

This sequence belongs to the DEAD box helicase family. DEAH subfamily. PRP16 sub-subfamily. In terms of assembly, interacts with the Phytophthora PSR1 protein.

The protein resides in the nucleus. It catalyses the reaction ATP + H2O = ADP + phosphate + H(+). Involved in pre-mRNA splicing by mediating structural transitions of the spliceosome during the catalytic step. Facilitates expression of genes involved in auxin-mediated development including male-gametophyte transmission, apical-basal patterning of embryonic and gynoecium development, stamen development, phyllotactic flower positioning, and vascular development. Also involved in root-meristem maintenance and planar polarity of root-hair positioning. Acts as a component of RNA silencing that regulates distinct classes of endogenous small RNAs. Functions as a positive regulator of plant immunity. This is Pre-mRNA-splicing factor ATP-dependent RNA helicase DEAH7 from Arabidopsis thaliana (Mouse-ear cress).